We begin with the raw amino-acid sequence, 421 residues long: MFTANMNIQDYDPILWQAIENENRRQEEHIELIASENYASPRVMQAQGSQFTNKYAEGYPGKRYYGGCEYADIVEQLAIDRAKQLFGADYVNVQPHSGSQANAAVYGALIQPNDTILGMDLAHGGHLTHGAKVSFSGKIYNSVLYGITAEGLIDYEDVRQKALECKPKMIVAGFSAYSQIVDWAKMREIADEVGAYLFVDMAHVAGLIAAGVYPSPLPYAHVVTTTTHKTLGGPRGGLILSACGDEEIYKKLQSSVFPANQGGPLVHIIAAKAVCFKEALEPEYKIYQQNVVKNAKAMVEVFKQRSYEVISNGTENHLFLVSFVKQGLTGKAADAALGQANITVNKNSVPNDPQKPFITSGIRIGTPAVTRRGFKEADVQALAGWMCDVLDSIGKDNHEQVIAETKAKVLDICARLPVYAK.

(6S)-5,6,7,8-tetrahydrofolate-binding positions include Leu121 and 125 to 127 (GHL). Residue Lys229 is modified to N6-(pyridoxal phosphate)lysine.

This sequence belongs to the SHMT family. In terms of assembly, homodimer. Pyridoxal 5'-phosphate serves as cofactor.

Its subcellular location is the cytoplasm. It carries out the reaction (6R)-5,10-methylene-5,6,7,8-tetrahydrofolate + glycine + H2O = (6S)-5,6,7,8-tetrahydrofolate + L-serine. It participates in one-carbon metabolism; tetrahydrofolate interconversion. The protein operates within amino-acid biosynthesis; glycine biosynthesis; glycine from L-serine: step 1/1. Functionally, catalyzes the reversible interconversion of serine and glycine with tetrahydrofolate (THF) serving as the one-carbon carrier. This reaction serves as the major source of one-carbon groups required for the biosynthesis of purines, thymidylate, methionine, and other important biomolecules. Also exhibits THF-independent aldolase activity toward beta-hydroxyamino acids, producing glycine and aldehydes, via a retro-aldol mechanism. This chain is Serine hydroxymethyltransferase, found in Actinobacillus pleuropneumoniae serotype 5b (strain L20).